Consider the following 84-residue polypeptide: Putative defensin-like protein 101 (84 aa).

The first 27 residues, 1-27 (MDITKNIVTLLLVVLFPILFYYNNVLA), serve as a signal peptide directing secretion. 4 disulfides stabilise this stretch: Cys-39-Cys-81, Cys-43-Cys-67, Cys-52-Cys-79, and Cys-56-Cys-80.

The protein belongs to the DEFL family.

The protein resides in the secreted. In Arabidopsis thaliana (Mouse-ear cress), this protein is Putative defensin-like protein 101.